The primary structure comprises 509 residues: Probable aspartic-type endopeptidase CTSD (509 aa).

Positions 1-21 (MQFLWLCLLSAVTLQFTGTLA) are cleaved as a signal peptide. In terms of domain architecture, Peptidase A1 spans 102 to 408 (YFSEVKVGSE…DFDKNRVGLA (307 aa)). Asp-120 is an active-site residue. Asn-174 carries N-linked (GlcNAc...) asparagine glycosylation. The active site involves Asp-302. The N-linked (GlcNAc...) asparagine glycan is linked to Asn-361. Residues 451–489 (NKAPSGGSPGLPAESGSDSTTNGEATNGATSSPNSSSSV) are disordered. A compositionally biased stretch (polar residues) spans 466–480 (GSDSTTNGEATNGAT). Asn-484 carries N-linked (GlcNAc...) asparagine glycosylation. Ser-485 is lipidated: GPI-anchor amidated serine. A propeptide spans 486–509 (SSSVLTPTWLTLAVFFAIGSSLWS) (removed in mature form).

Belongs to the peptidase A1 family.

The protein localises to the cell membrane. Functionally, probable GPI-anchored aspartic-type endopeptidase which contributes to virulence. The protein is Probable aspartic-type endopeptidase CTSD (CTSD) of Trichophyton verrucosum (strain HKI 0517).